Here is an 85-residue protein sequence, read N- to C-terminus: Putative regulatory protein THEYE_A0405 (85 aa).

This sequence belongs to the RemA family.

This Thermodesulfovibrio yellowstonii (strain ATCC 51303 / DSM 11347 / YP87) protein is Putative regulatory protein THEYE_A0405.